The chain runs to 232 residues: tRNA (guanine-N(1)-)-methyltransferase (232 aa).

Residues G112 and 132–137 (IGDYIL) each bind S-adenosyl-L-methionine.

Belongs to the RNA methyltransferase TrmD family. As to quaternary structure, homodimer.

Its subcellular location is the cytoplasm. The enzyme catalyses guanosine(37) in tRNA + S-adenosyl-L-methionine = N(1)-methylguanosine(37) in tRNA + S-adenosyl-L-homocysteine + H(+). Specifically methylates guanosine-37 in various tRNAs. In Methylacidiphilum infernorum (isolate V4) (Methylokorus infernorum (strain V4)), this protein is tRNA (guanine-N(1)-)-methyltransferase.